The chain runs to 364 residues: Uroporphyrinogen decarboxylase (364 aa).

Residues 28 to 32, Asp-78, Tyr-160, Thr-215, and His-333 each bind substrate; that span reads RQAGR.

It belongs to the uroporphyrinogen decarboxylase family. In terms of assembly, homodimer.

It is found in the cytoplasm. The enzyme catalyses uroporphyrinogen III + 4 H(+) = coproporphyrinogen III + 4 CO2. It functions in the pathway porphyrin-containing compound metabolism; protoporphyrin-IX biosynthesis; coproporphyrinogen-III from 5-aminolevulinate: step 4/4. Catalyzes the decarboxylation of four acetate groups of uroporphyrinogen-III to yield coproporphyrinogen-III. This chain is Uroporphyrinogen decarboxylase, found in Burkholderia thailandensis (strain ATCC 700388 / DSM 13276 / CCUG 48851 / CIP 106301 / E264).